We begin with the raw amino-acid sequence, 167 residues long: Iron-sulfur cluster assembly enzyme ISCU (167 aa).

The N-terminal 34 residues, Met-1–Leu-34, are a transit peptide targeting the mitochondrion. The residue at position 14 (Ser-14) is a Phosphoserine; by MTOR. Pro-46 contacts Zn(2+). Cys-69 acts as the Cysteine persulfide intermediate in catalysis. A Cysteine persulfide modification is found at Cys-69. Zn(2+)-binding residues include Gly-70, Asp-71, Cys-95, Lys-112, and Cys-138. Catalysis depends on Cys-138, which acts as the Cysteine persulfide intermediate. A Cysteine persulfide modification is found at Cys-138.

The protein belongs to the NifU family. In terms of assembly, homodimer; Tyr-35-mediated dimerization of two iron- and sulfide-containing ISCU subunit bind to the cysteine desulfurase complex. Component of the mitochondrial core iron-sulfur cluster (ISC) complex composed of NFS1, LYRM4, NDUFAB1, ISCU, FXN, and FDX2; this complex is an heterohexamer containing two copies of each monomer. Interacts (D-state) with NFS1 (homodimer form); each monomer interacts with the C-terminal regions of each NFS1 monomer. Interacts (monomer form) with FXN (via ferrous form); the interaction is possible when both are bound to the dimeric form of the cysteine desulfurase complex (NFS1:LYRM4) and enhances FXN interaction to the dimeric form of the cysteine desulfurase complex (NFS1:LYRM4). Interacts with GLRX5. Interacts (D-state) with HSPA9. Interacts (S-state) with HSCB; this interaction stimulates the ATPase activity of HSPA9. As to quaternary structure, component of the cytoplasmic core iron-sulfur cluster (ISC) complex composed at least of NFS1, LYRM4, and ISCU; this complex interacts with FXN. Monomer; each monomer binds to the C-terminal regions of NFS1 (cytoplasmic and homodimer form). Interacts with NFS1 (cytoplasmic and homodimer form); this interaction promotes de novo iron-sulfur cluster formation. Interacts with HSCB (cytoplasmic form); this interaction stabilizes the (Fe-S) clusters on ISCU. Post-translationally, phosphorylation at Ser-14 is required for ISCU protein stabilization in the cytosol, whereas dephosphorylation of Ser-14, due to the inhibition of mTORC1 (mammalian target of rapamycin complex 1) complex, leads to degradation of the precursor form and ultimately to a decrease in the mitochondrial mature form. In terms of processing, cysteine persulfide is reduced by thiol-containing molecules such as glutathione and L-cysteine. In terms of tissue distribution, detected in heart, liver, skeletal muscle, brain, pancreas, kidney, lung and placenta.

It localises to the mitochondrion. The protein resides in the cytoplasm. The protein localises to the nucleus. Functionally, mitochondrial scaffold protein, of the core iron-sulfur cluster (ISC) assembly complex, that provides the structural architecture on which the [2Fe-2S] clusters are assembled. The core iron-sulfur cluster (ISC) assembly complex is involved in the de novo synthesis of a [2Fe-2S] cluster, the first step of the mitochondrial iron-sulfur protein biogenesis. This process is initiated by the cysteine desulfurase complex (NFS1:LYRM4:NDUFAB1) that produces persulfide which is delivered on the scaffold protein ISCU in a FXN-dependent manner. Then this complex is stabilized by FDX2 which provides reducing equivalents to accomplish the [2Fe-2S] cluster assembly. Finally, the [2Fe-2S] cluster is transferred from ISCU to chaperone proteins, including HSCB, HSPA9 and GLRX5. Exists as two slow interchanging conformational states, a structured (S) and disordered (D) form. May modulate NFS1 desulfurase activity in a zinc-dependent manner. Modulates the interaction between FXN and the cysteine desulfurase complex. Cytoplasmic scaffold protein, of the cytoplasmic core iron-sulfur cluster (ISC) assembly complex that provides the structural architecture on which the Fe-S clusters are assembled and may be involved in the cytoplasmic iron-sulfur protein biogenesis. The chain is Iron-sulfur cluster assembly enzyme ISCU from Homo sapiens (Human).